The primary structure comprises 410 residues: Proteasome-activating nucleotidase (410 aa).

Residues 1 to 70 (MENNSQNVLK…LRGEIERFRT (70 aa)) adopt a coiled-coil conformation. ATP is bound by residues 195 to 200 (GTGKTL) and histidine 334. Residues 408–410 (MFG) form a docks into pockets in the proteasome alpha-ring to cause gate opening region.

Belongs to the AAA ATPase family. Homohexamer. The hexameric complex has a two-ring architecture resembling a top hat that caps the 20S proteasome core at one or both ends. Upon ATP-binding, the C-terminus of PAN interacts with the alpha-rings of the proteasome core by binding to the intersubunit pockets.

The protein localises to the cytoplasm. Its function is as follows. ATPase which is responsible for recognizing, binding, unfolding and translocation of substrate proteins into the archaeal 20S proteasome core particle. Is essential for opening the gate of the 20S proteasome via an interaction with its C-terminus, thereby allowing substrate entry and access to the site of proteolysis. Thus, the C-termini of the proteasomal ATPase function like a 'key in a lock' to induce gate opening and therefore regulate proteolysis. Unfolding activity requires energy from ATP hydrolysis, whereas ATP binding alone promotes ATPase-20S proteasome association which triggers gate opening, and supports translocation of unfolded substrates. This is Proteasome-activating nucleotidase from Methanothermobacter thermautotrophicus (strain ATCC 29096 / DSM 1053 / JCM 10044 / NBRC 100330 / Delta H) (Methanobacterium thermoautotrophicum).